We begin with the raw amino-acid sequence, 370 residues long: Cytochrome b (370 aa).

4 helical membrane passes run 25 to 45 (FGSM…FLAV), 69 to 90 (WMMQ…YIHI), 105 to 125 (WLSG…GYVL), and 170 to 190 (FFAL…LHVM). Residues histidine 75 and histidine 89 each contribute to the heme b site. Residues histidine 174 and histidine 188 each coordinate heme b. Histidine 193 contacts a ubiquinone. Helical transmembrane passes span 218 to 238 (YKDL…ISFY), 280 to 300 (LGGA…PFTH), 312 to 332 (FMQL…WTAT), and 339 to 358 (FTMI…ISNP).

This sequence belongs to the cytochrome b family. As to quaternary structure, the cytochrome bc1 complex contains 3 respiratory subunits (MT-CYB, CYC1 and UQCRFS1), 2 core proteins (UQCRC1 and UQCRC2) and probably 6 low-molecular weight proteins. The cofactor is heme b.

The protein localises to the mitochondrion inner membrane. Component of the ubiquinol-cytochrome c reductase complex (complex III or cytochrome b-c1 complex) that is part of the mitochondrial respiratory chain. The b-c1 complex mediates electron transfer from ubiquinol to cytochrome c. Contributes to the generation of a proton gradient across the mitochondrial membrane that is then used for ATP synthesis. The chain is Cytochrome b (MT-CYB) from Corallus hortulanus enydris (Garden tree boa).